A 188-amino-acid chain; its full sequence is UPF0301 protein XF_2228 (188 aa).

It belongs to the UPF0301 (AlgH) family.

This Xylella fastidiosa (strain 9a5c) protein is UPF0301 protein XF_2228.